Here is a 371-residue protein sequence, read N- to C-terminus: tRNA 2-selenouridine synthase (371 aa).

The 124-residue stretch at 14 to 137 (FLDDVPLIDL…MRRFLIDTLD (124 aa)) folds into the Rhodanese domain. The active-site S-selanylcysteine intermediate is cysteine 97.

It belongs to the SelU family. As to quaternary structure, monomer.

It carries out the reaction 5-methylaminomethyl-2-thiouridine(34) in tRNA + selenophosphate + (2E)-geranyl diphosphate + H2O + H(+) = 5-methylaminomethyl-2-selenouridine(34) in tRNA + (2E)-thiogeraniol + phosphate + diphosphate. It catalyses the reaction 5-methylaminomethyl-2-thiouridine(34) in tRNA + (2E)-geranyl diphosphate = 5-methylaminomethyl-S-(2E)-geranyl-thiouridine(34) in tRNA + diphosphate. The enzyme catalyses 5-methylaminomethyl-S-(2E)-geranyl-thiouridine(34) in tRNA + selenophosphate + H(+) = 5-methylaminomethyl-2-(Se-phospho)selenouridine(34) in tRNA + (2E)-thiogeraniol. The catalysed reaction is 5-methylaminomethyl-2-(Se-phospho)selenouridine(34) in tRNA + H2O = 5-methylaminomethyl-2-selenouridine(34) in tRNA + phosphate. Its function is as follows. Involved in the post-transcriptional modification of the uridine at the wobble position (U34) of tRNA(Lys), tRNA(Glu) and tRNA(Gln). Catalyzes the conversion of 2-thiouridine (S2U-RNA) to 2-selenouridine (Se2U-RNA). Acts in a two-step process involving geranylation of 2-thiouridine (S2U) to S-geranyl-2-thiouridine (geS2U) and subsequent selenation of the latter derivative to 2-selenouridine (Se2U) in the tRNA chain. This chain is tRNA 2-selenouridine synthase, found in Aeromonas salmonicida (strain A449).